Reading from the N-terminus, the 651-residue chain is E3 SUMO-protein ligase PIAS1 (651 aa).

Alanine 2 carries the post-translational modification N-acetylalanine. The required for interaction with MSX1 stretch occupies residues 2 to 200; that stretch reads ADSAELKQMV…KCDFTVQVQL (199 aa). The 35-residue stretch at 11–45 folds into the SAP domain; sequence VMSLRVSELQVLLGYAGRNKHGRKHELLTKALHLL. Positions 19–23 match the LXXLL motif motif; that stretch reads LQVLL. Glycyl lysine isopeptide (Lys-Gly) (interchain with G-Cter in SUMO2) cross-links involve residues lysine 40 and lysine 46. Positions 56–64 match the Nuclear localization signal motif; it reads KIKELYRRR. Residues 124–288 form the PINIT domain; that stretch reads HLTSALHPVH…SMAVYLVKQL (165 aa). Glycyl lysine isopeptide (Lys-Gly) (interchain with G-Cter in SUMO2) cross-links involve residues lysine 137 and lysine 238. An SP-RING-type zinc finger spans residues 320-405; sequence PDSEIATTSL…LKYCTDCDEI (86 aa). Zn(2+)-binding residues include cysteine 351, histidine 353, cysteine 374, and cysteine 377. The Nuclear localization signal signature appears at 368-380; that stretch reads KKPTWVCPVCDKK. Lysine 453 is covalently cross-linked (Glycyl lysine isopeptide (Lys-Gly) (interchain with G-Cter in SUMO2)). The SUMO1-binding stretch occupies residues 462–473; that stretch reads LTIDSSSDEEEE. The disordered stretch occupies residues 465 to 511; the sequence is DSSSDEEEEEPSAKRTCPSLSPTSPLNNKGILSLPHQASPVSRTPSL. Phosphoserine is present on residues serine 467, serine 468, serine 483, and serine 485. The segment covering 482–491 has biased composition (polar residues); the sequence is PSLSPTSPLN. Threonine 487 carries the post-translational modification Phosphothreonine. At serine 488 the chain carries Phosphoserine. Lysine 493 participates in a covalent cross-link: Glycyl lysine isopeptide (Lys-Gly) (interchain with G-Cter in SUMO2). 3 positions are modified to phosphoserine: serine 503, serine 510, and serine 522. Tandem repeats lie at residues 520 to 523 and 557 to 560. Positions 520–615 are 4 X 4 AA repeats of N-T-S-L; that stretch reads NTSLIQDYRH…GSSSGSNSSL (96 aa). One copy of the 3; approximate repeat lies at 598–601; it reads STSL. Low complexity predominate over residues 599-621; the sequence is TSLPTTNGSSSGSNSSLVSSNSL. Residues 599–632 form a disordered region; that stretch reads TSLPTTNGSSSGSNSSLVSSNSLRESHSHTVTNR. A 4; approximate repeat occupies 612–615; it reads NSSL.

This sequence belongs to the PIAS family. As to quaternary structure, interacts with NCOA2 and AR. Interacts with NR2C1; the interaction promotes its sumoylation. Interacts with DDX21, CSRP2, AXIN1, JUN, UBE2I, SUMO1, SATB2, PLAG1, TP53 and STAT1 (dimer), following IFNA1-stimulation. Interacts with SP3 (preferentially when SUMO-modified). Interacts with KLF8; the interaction results in SUMO ligation and repression of KLF8 transcriptional activity and of its cell cycle progression into G(1) phase. Interacts with CHUK/IKKA; this interaction induces PIAS1 phosphorylation. Interacts with PTK2/FAK1; the interaction promotes its sumoylation. Interacts with DDX5. Interacts with PML. Interacts with MTA1. Interacts with SUMO1P1/SUMO5. Interacts with PRDM1/Blimp-1. Interacts (via N-terminus) with MSX1 (via C-terminus); the interaction is required for the localization of both proteins to the nuclear periphery and specific binding of MSX1 to the core enhancer region in target gene promoters. In terms of assembly, (Microbial infection) Interacts with ebolavirus VP35; this interaction mediates the sumoylation of IRF7 and contributes to the viral inhibition of IFN-type I production. Sumoylated. In terms of tissue distribution, expressed in numerous tissues with highest level in testis.

It is found in the nucleus. It localises to the nucleus speckle. The protein resides in the PML body. Its subcellular location is the cytoplasm. The protein localises to the cytoskeleton. Its pathway is protein modification; protein sumoylation. Functions as an E3-type small ubiquitin-like modifier (SUMO) ligase, stabilizing the interaction between UBE2I and the substrate, and as a SUMO-tethering factor. Catalyzes sumoylation of various proteins, such as CEBPB, MRE11, MTA1, PTK2 and PML. Plays a crucial role as a transcriptional coregulation in various cellular pathways, including the STAT pathway, the p53 pathway and the steroid hormone signaling pathway. In vitro, binds A/T-rich DNA. The effects of this transcriptional coregulation, transactivation or silencing, may vary depending upon the biological context. Mediates sumoylation of MRE11, stabilizing MRE11 on chromatin during end resection. Sumoylates PML (at 'Lys-65' and 'Lys-160') and PML-RAR and promotes their ubiquitin-mediated degradation. PIAS1-mediated sumoylation of PML promotes its interaction with CSNK2A1/CK2 which in turn promotes PML phosphorylation and degradation. Enhances the sumoylation of MTA1 and may participate in its paralog-selective sumoylation. Plays a dynamic role in adipogenesis by promoting the SUMOylation and degradation of CEBPB. Mediates the nuclear mobility and localization of MSX1 to the nuclear periphery, whereby MSX1 is brought into the proximity of target myoblast differentiation factor genes. Also required for the binding of MSX1 to the core enhancer region in target gene promoter regions, independent of its sumoylation activity. Capable of binding to the core enhancer region TAAT box in the MYOD1 gene promoter. Its function is as follows. (Microbial infection) Restricts Epstein-Barr virus (EBV) lytic replication by acting as an inhibitor for transcription factors involved in lytic gene expression. The virus can use apoptotic caspases to antagonize PIAS1-mediated restriction and express its lytic genes. This Homo sapiens (Human) protein is E3 SUMO-protein ligase PIAS1 (PIAS1).